Reading from the N-terminus, the 108-residue chain is Transmembrane protein 265 (108 aa).

A run of 2 helical transmembrane segments spans residues 34 to 54 (AATSIICGCSCLGVMALVFAI) and 78 to 98 (LILASFAVWLAVLILGPLLLW).

It belongs to the CD225/Dispanin family.

It localises to the membrane. This is Transmembrane protein 265 from Homo sapiens (Human).